Reading from the N-terminus, the 383-residue chain is Protein dyf-4 (383 aa).

The signal sequence occupies residues 1–16 (MKTIWLLLATCIHVFA). Asn-64 carries N-linked (GlcNAc...) asparagine glycosylation.

In terms of assembly, interacts with daf-6. Expressed in sheath and socket glial cells in both the amphid and phasmid ciliated sensory neurons (at protein level).

Its subcellular location is the secreted. Functionally, required for the localization of daf-6 to the socket glial channel and the sheath lumen. In association with daf-6, plays a role in dendrite extension and ciliogenesis to ensure the formation of glial channels in amphid and phasmid ciliated sensory neurons. The chain is Protein dyf-4 from Caenorhabditis elegans.